Here is a 245-residue protein sequence, read N- to C-terminus: D-aminoacyl-tRNA deacylase (245 aa).

It belongs to the DtdA deacylase family. In terms of assembly, monomer. It depends on Zn(2+) as a cofactor.

It carries out the reaction a D-aminoacyl-tRNA + H2O = a tRNA + a D-alpha-amino acid + H(+). The catalysed reaction is glycyl-tRNA(Ala) + H2O = tRNA(Ala) + glycine + H(+). In terms of biological role, D-aminoacyl-tRNA deacylase with broad substrate specificity. By recycling D-aminoacyl-tRNA to D-amino acids and free tRNA molecules, this enzyme counteracts the toxicity associated with the formation of D-aminoacyl-tRNA entities in vivo. This chain is D-aminoacyl-tRNA deacylase, found in Ignicoccus hospitalis (strain KIN4/I / DSM 18386 / JCM 14125).